A 419-amino-acid chain; its full sequence is NF-kappa-B essential modulator (419 aa).

Residues 1 to 48 are disordered; sequence MSRPPWKSPLCEMVQPSGSPAGDQDMLGEESSLGKPAMLHVPSEQGTP. The required for interaction with and ubiquitination by MARCHF2 stretch occupies residues 1–197; sequence MSRPPWKSPL…REALEQRHSV (197 aa). 2 positions are modified to phosphoserine; by IKKB: Ser-31 and Ser-43. An interaction with CHUK/IKBKB region spans residues 44–111; sequence EQGTPETFQR…DLVVRLSLEK (68 aa). Residues 49–353 adopt a coiled-coil conformation; sequence ETFQRCLEEN…KTSCQESARI (305 aa). Residue Ser-68 is modified to Phosphoserine. Glycyl lysine isopeptide (Lys-Gly) (interchain with G-Cter in ubiquitin) cross-links involve residues Lys-111, Lys-139, Lys-143, Lys-226, Lys-246, and Lys-264. The segment at 150-257 is interaction with TANK; that stretch reads LGELQESQSR…SMVSSERNRG (108 aa). The ubiquitin-binding (UBAN) stretch occupies residues 242-350; the sequence is DNHMKSSMVS…SRLKTSCQES (109 aa). The segment at 246-365 is self-association; it reads KSSMVSSERN…MRKRHVEVSQ (120 aa). Residues 251-419 form a required for interaction with TNFAIP3 region; it reads SSERNRGLQL…LQIHVMECIE (169 aa). A Glycyl lysine isopeptide (Lys-Gly) (interchain with G-Cter in SUMO); alternate cross-link involves residue Lys-277. Lys-277 is covalently cross-linked (Glycyl lysine isopeptide (Lys-Gly) (interchain with G-Cter in ubiquitin); alternate). Residues Lys-283, Lys-285, Lys-292, and Lys-302 each participate in a glycyl lysine isopeptide (Lys-Gly) (interchain with G-Cter in ubiquitin) cross-link. Residue Lys-309 forms a Glycyl lysine isopeptide (Lys-Gly) (interchain with G-Cter in SUMO); alternate linkage. Lys-309 is covalently cross-linked (Glycyl lysine isopeptide (Lys-Gly) (interchain with G-Cter in ubiquitin); alternate). Glycyl lysine isopeptide (Lys-Gly) (interchain with G-Cter in ubiquitin) cross-links involve residues Lys-321, Lys-325, and Lys-326. Positions 322–343 are leucine-zipper; that stretch reads LAEKKEFLQEQLEQLQREYSRL. The tract at residues 356 to 394 is disordered; sequence MRKRHVEVSQPPLAPGPAHHSFHLNPSSQRRSPPDEPPK. Phosphoserine; by IKKB is present on Ser-376. Residues 382–419 form an interaction with CYLD region; that stretch reads SSQRRSPPDEPPKFCCPKCQYQAPDIDTLQIHVMECIE. Residue Ser-387 is modified to Phosphoserine. A CCHC NOA-type zinc finger spans residues 389-419; that stretch reads PDEPPKFCCPKCQYQAPDIDTLQIHVMECIE. Cys-397 lines the Zn(2+) pocket. A Glycyl lysine isopeptide (Lys-Gly) (interchain with G-Cter in ubiquitin) cross-link involves residue Lys-399. Positions 400, 413, and 417 each coordinate Zn(2+).

In terms of assembly, homodimer; disulfide-linked. Component of the I-kappa-B-kinase (IKK) core complex consisting of CHUK, IKBKB and IKBKG; probably four alpha/CHUK-beta/IKBKB dimers are associated with four gamma/IKBKG subunits. The IKK core complex seems to associate with regulatory or adapter proteins to form a IKK-signalosome holo-complex. The IKK complex associates with TERF2IP/RAP1, leading to promote IKK-mediated phosphorylation of RELA/p65. Part of a complex composed of NCOA2, NCOA3, CHUK/IKKA, IKBKB, IKBKG and CREBBP. Interacts with COPS3, CYLD, NALP2, TRPC4AP and PIDD1. Interacts with ATM; the complex is exported from the nucleus. Interacts with TRAF6. Interacts with IKBKE. Interacts with TANK; the interaction is enhanced by IKBKE and TBK1. Part of a ternary complex consisting of TANK, IKBKB and IKBKG. Interacts with ZFAND5. Interacts with RIPK2. Interacts with TNIP1 and TNFAIP3; TNIP1 facilitates the TNFAIP3-mediated de-ubiquitination of IKBKG. Interacts with TNFAIP3; the interaction is induced by TNF stimulation and by polyubiquitin. Binds (via UBAN region) polyubiquitin; binds both 'Lys-63'-linked and linear polyubiquitin, with higher affinity for linear ubiquitin. Interacts with NLRP10. Interacts with TANK; this interaction increases in response to DNA damage. Interacts with USP10; this interaction increases in response to DNA damage. Interacts with ZC3H12A; this interaction increases in response to DNA damage. Interacts with IFIT5; the interaction synergizes the recruitment of IKK to MAP3K7 and enhances IKK phosphorylation. Interacts with TRIM29; this interaction induces IKBKG/NEMO ubiquitination and proteolytic degradation. Interacts with TRIM13; this interaction leads to IKBKG/NEMO ubiquitination. Interacts with ARFIP2. Interacts with RIPK1. Interacts with (ubiquitinated) BCL10; interaction with polyubiquitinated BCL10 via both 'Lys-63'-linked and linear ubiquitin is required for TCR-induced NF-kappa-B activation. Interacts with MARCHF2; during the late stages of macrophage viral and bacterial infection; the interaction leads to ubiquitination and degradation of IKBKG/NEMO. Post-translationally, phosphorylation at Ser-68 attenuates aminoterminal homodimerization. In terms of processing, polyubiquitinated on Lys-285 through 'Lys-63'; the ubiquitination is mediated downstream of NOD2 and RIPK2 and probably plays a role in signaling by facilitating interactions with ubiquitin domain-containing proteins and activates the NF-kappa-B pathway. Polyubiquitinated on Lys-399 through 'Lys-63'; the ubiquitination is mediated by BCL10, MALT1 and TRAF6 and probably plays a role in signaling by facilitating interactions with ubiquitin domain-containing proteins and activates the NF-kappa-B pathway. Monoubiquitinated on Lys-277 and Lys-309; promotes nuclear export. Polyubiquitinated through 'Lys-27' by TRIM23; involved in antiviral innate and inflammatory responses. Linear polyubiquitinated on Lys-111, Lys-143, Lys-226, Lys-246, Lys-264, Lys-277, Lys-285, Lys-292, Lys-302, Lys-309 and Lys-326; the head-to-tail polyubiquitination is mediated by the LUBAC complex and plays a key role in NF-kappa-B activation. Deubiquitinated by USP10 in a TANK-dependent and -independent manner, leading to the negative regulation of NF-kappa-B signaling upon DNA damage. Ubiquitinated at Lys-326 by MARCHF2 following bacterial and viral infection which leads to its degradation. Polyubiquitinated via 'Lys-29'-linked ubiquitin; leading to lysosomal degradation. Sumoylated on Lys-277 and Lys-309 with SUMO1. Post-translationally, neddylated by TRIM40, resulting in stabilization of NFKBIA and down-regulation of NF-kappa-B activity.

The protein resides in the cytoplasm. The protein localises to the nucleus. Functionally, regulatory subunit of the IKK core complex which phosphorylates inhibitors of NF-kappa-B thus leading to the dissociation of the inhibitor/NF-kappa-B complex and ultimately the degradation of the inhibitor. Its binding to scaffolding polyubiquitin plays a key role in IKK activation by multiple signaling receptor pathways. Can recognize and bind both 'Lys-63'-linked and linear polyubiquitin upon cell stimulation, with a much highr affinity for linear polyubiquitin. Could be implicated in NF-kappa-B-mediated protection from cytokine toxicity. Essential for viral activation of IRF3. Involved in TLR3- and IFIH1-mediated antiviral innate response; this function requires 'Lys-27'-linked polyubiquitination. This chain is NF-kappa-B essential modulator (IKBKG), found in Bos taurus (Bovine).